A 242-amino-acid chain; its full sequence is Probable transcriptional regulatory protein lhv_0777 (242 aa).

Residues 1–22 (MSGHSKWHNIQGRKNAQDAKRG) are disordered.

Belongs to the TACO1 family.

It localises to the cytoplasm. This is Probable transcriptional regulatory protein lhv_0777 from Lactobacillus helveticus (strain DPC 4571).